The following is a 1162-amino-acid chain: DNA-directed RNA polymerase subunit beta (1162 aa).

The protein belongs to the RNA polymerase beta chain family. In terms of assembly, the RNAP catalytic core consists of 2 alpha, 1 beta, 1 beta' and 1 omega subunit. When a sigma factor is associated with the core the holoenzyme is formed, which can initiate transcription.

It catalyses the reaction RNA(n) + a ribonucleoside 5'-triphosphate = RNA(n+1) + diphosphate. In terms of biological role, DNA-dependent RNA polymerase catalyzes the transcription of DNA into RNA using the four ribonucleoside triphosphates as substrates. This Clavibacter sepedonicus (Clavibacter michiganensis subsp. sepedonicus) protein is DNA-directed RNA polymerase subunit beta.